Consider the following 372-residue polypeptide: Cobalt-precorrin-5B C(1)-methyltransferase (372 aa).

The protein belongs to the CbiD family.

The catalysed reaction is Co-precorrin-5B + S-adenosyl-L-methionine = Co-precorrin-6A + S-adenosyl-L-homocysteine. Its pathway is cofactor biosynthesis; adenosylcobalamin biosynthesis; cob(II)yrinate a,c-diamide from sirohydrochlorin (anaerobic route): step 6/10. Catalyzes the methylation of C-1 in cobalt-precorrin-5B to form cobalt-precorrin-6A. The sequence is that of Cobalt-precorrin-5B C(1)-methyltransferase from Geobacillus thermodenitrificans (strain NG80-2).